We begin with the raw amino-acid sequence, 116 residues long: Large ribosomal subunit protein uL24 (116 aa).

Belongs to the universal ribosomal protein uL24 family. Part of the 50S ribosomal subunit.

Its function is as follows. One of two assembly initiator proteins, it binds directly to the 5'-end of the 23S rRNA, where it nucleates assembly of the 50S subunit. Functionally, located at the polypeptide exit tunnel on the outside of the subunit. The chain is Large ribosomal subunit protein uL24 from Methanosarcina barkeri (strain Fusaro / DSM 804).